Consider the following 291-residue polypeptide: tRNA U34 carboxymethyltransferase (291 aa).

Residues Lys-61, Trp-75, Lys-80, Gly-100, 122 to 124 (DPS), 149 to 150 (VE), Tyr-169, and Arg-284 contribute to the carboxy-S-adenosyl-L-methionine site.

The protein belongs to the class I-like SAM-binding methyltransferase superfamily. CmoB family. Homotetramer.

The enzyme catalyses carboxy-S-adenosyl-L-methionine + 5-hydroxyuridine(34) in tRNA = 5-carboxymethoxyuridine(34) in tRNA + S-adenosyl-L-homocysteine + H(+). Catalyzes carboxymethyl transfer from carboxy-S-adenosyl-L-methionine (Cx-SAM) to 5-hydroxyuridine (ho5U) to form 5-carboxymethoxyuridine (cmo5U) at position 34 in tRNAs. The chain is tRNA U34 carboxymethyltransferase from Campylobacter jejuni (strain RM1221).